The sequence spans 481 residues: Glutamate--tRNA ligase (481 aa).

Residues 11 to 21 (PSPTGLLHIGN) carry the 'HIGH' region motif. A 'KMSKS' region motif is present at residues 255 to 259 (KLSKR). Lys-258 contributes to the ATP binding site.

Belongs to the class-I aminoacyl-tRNA synthetase family. Glutamate--tRNA ligase type 1 subfamily. In terms of assembly, monomer.

The protein localises to the cytoplasm. The catalysed reaction is tRNA(Glu) + L-glutamate + ATP = L-glutamyl-tRNA(Glu) + AMP + diphosphate. Its function is as follows. Catalyzes the attachment of glutamate to tRNA(Glu) in a two-step reaction: glutamate is first activated by ATP to form Glu-AMP and then transferred to the acceptor end of tRNA(Glu). The sequence is that of Glutamate--tRNA ligase from Streptococcus pyogenes serotype M3 (strain ATCC BAA-595 / MGAS315).